The following is a 377-amino-acid chain: NADH dehydrogenase [ubiquinone] 1 alpha subcomplex subunit 9, mitochondrial (377 aa).

A mitochondrion-targeting transit peptide spans methionine 1–glutamine 35. Lysine 175 carries the post-translational modification N6-succinyllysine. Residues lysine 189 and lysine 370 each carry the N6-acetyllysine modification.

This sequence belongs to the complex I NDUFA9 subunit family. As to quaternary structure, complex I is composed of 45 different subunits. This a component of the hydrophobic protein fraction. Interacts with BLOC1S1. Interacts with SLC2A4. Interacts with CLOCK. Interacts with RAB5IF. Requires FAD as cofactor. Post-translationally, acetylated on lysine residues. BLOC1S1 is required for acetylation. Acetylated by CLOCK in a circadian manner. In terms of tissue distribution, expressed by the principal cells of the epididymis. Detected in flagella of epididymal sperm (at protein level).

It localises to the mitochondrion matrix. Its function is as follows. Accessory subunit of the mitochondrial membrane respiratory chain NADH dehydrogenase (Complex I), that is believed not to be involved in catalysis. Complex I functions in the transfer of electrons from NADH to the respiratory chain. The immediate electron acceptor for the enzyme is believed to be ubiquinone. The chain is NADH dehydrogenase [ubiquinone] 1 alpha subcomplex subunit 9, mitochondrial from Rattus norvegicus (Rat).